The chain runs to 286 residues: ATP synthase gamma chain (286 aa).

This sequence belongs to the ATPase gamma chain family. In terms of assembly, F-type ATPases have 2 components, CF(1) - the catalytic core - and CF(0) - the membrane proton channel. CF(1) has five subunits: alpha(3), beta(3), gamma(1), delta(1), epsilon(1). CF(0) has three main subunits: a, b and c.

The protein resides in the cell inner membrane. Functionally, produces ATP from ADP in the presence of a proton gradient across the membrane. The gamma chain is believed to be important in regulating ATPase activity and the flow of protons through the CF(0) complex. This chain is ATP synthase gamma chain, found in Marinomonas sp. (strain MWYL1).